The sequence spans 120 residues: Autophagy-related protein 8d (120 aa).

Gly117 is lipidated: Phosphatidylethanolamine amidated glycine. The propeptide at 118–120 (IFF) is removed in mature form.

Belongs to the ATG8 family. In terms of assembly, interacts with ATG4B. Interacts with NBR1. The C-terminal 3 residues are removed by ATG4 to expose Gly-117 at the C-terminus. This Gly-117 forms then a thioester bond with the 'Cys-558' of ATG7 (E1-like activating enzyme) before being transferred to the 'Cys-258' of ATG3 (the specific E2 conjugating enzyme), in order to be finally amidated with phosphatidylethanolamine. This lipid modification anchors ATG8 to autophagosomes. As to expression, constitutively expressed.

It is found in the cytoplasmic vesicle. Its subcellular location is the autophagosome membrane. It localises to the vacuole membrane. The protein resides in the cytoplasm. The protein localises to the cytoskeleton. Ubiquitin-like modifier involved in autophagosomes formation. May mediate the delivery of the autophagosomes to the vacuole via the microtubule cytoskeleton. The polypeptide is Autophagy-related protein 8d (ATG8D) (Arabidopsis thaliana (Mouse-ear cress)).